The primary structure comprises 170 residues: UPF0161 protein At3g09310 (170 aa).

Disordered stretches follow at residues 49-70 and 147-170; these read CLSAKSTPSKPDPASPQDGEEL and SGIKLREGDEEEEDNYDDEDQRKI. Residues 154 to 170 are compositionally biased toward acidic residues; that stretch reads GDEEEEDNYDDEDQRKI.

Belongs to the UPF0161 family.

This chain is UPF0161 protein At3g09310, found in Arabidopsis thaliana (Mouse-ear cress).